The chain runs to 175 residues: Cytochrome c homolog (175 aa).

The Cytoplasmic segment spans residues 1-8; sequence MTGKELNK. A helical; Signal-anchor transmembrane segment spans residues 9–29; that stretch reads IVAAILFASLIAMIVGFIANI. The Periplasmic portion of the chain corresponds to 30–175; the sequence is LYKPNLHVLH…LFLKNYVHDQ (146 aa). C84, C87, H88, and M150 together coordinate heme c.

The protein belongs to the cytochrome c family. Post-translationally, binds 1 heme c group covalently per subunit.

It localises to the cell membrane. In terms of biological role, may be involved in electron transfer from bc1 complex to aa3. This Rickettsia prowazekii (strain Madrid E) protein is Cytochrome c homolog (cycM).